The chain runs to 257 residues: Type III pantothenate kinase (257 aa).

Position 7–14 (7–14) interacts with ATP; the sequence is DIGNSHTV. 106–109 contributes to the substrate binding site; sequence GTDR. Asp108 (proton acceptor) is an active-site residue. Asp128 is a binding site for K(+). Position 132 (Thr132) interacts with ATP. Thr184 serves as a coordination point for substrate.

Belongs to the type III pantothenate kinase family. Homodimer. The cofactor is NH4(+). Requires K(+) as cofactor.

The protein resides in the cytoplasm. It carries out the reaction (R)-pantothenate + ATP = (R)-4'-phosphopantothenate + ADP + H(+). It participates in cofactor biosynthesis; coenzyme A biosynthesis; CoA from (R)-pantothenate: step 1/5. Functionally, catalyzes the phosphorylation of pantothenate (Pan), the first step in CoA biosynthesis. The protein is Type III pantothenate kinase of Nocardioides sp. (strain ATCC BAA-499 / JS614).